Reading from the N-terminus, the 431-residue chain is Cleavage stimulation factor subunit 1 (431 aa).

WD repeat units lie at residues 106–145 (SHKGPCRVATYSRDGQLIATGSADASIKILDTERMLAKSA), 171–210 (DHVDEVTCLAFHPTEQILASGSRDYTLKLFDYSKPSAKRA), 215–254 (QEAEMLRSISFHPSGDFILVGTQHPTLRLYDINTFQCFVS), 260–301 (QHTD…TTFE), 303–343 (AHDG…TLVR), and 395–431 (GHNNIVRCIVHSPTNPGFMTCSDDFRARFWYRRSTTD).

In terms of assembly, homodimer. The CSTF complex is composed of CSTF1 (50 kDa subunit), CSTF2 (64 kDa subunit) and CSTF3 (77 kDa subunit). Interacts (via repeats WD) directly with CSTF3. Interacts (via repeat WD6) with BARD1. Interacts with ERCC6.

The protein resides in the nucleus. One of the multiple factors required for polyadenylation and 3'-end cleavage of mammalian pre-mRNAs. May be responsible for the interaction of CSTF with other factors to form a stable complex on the pre-mRNA. This is Cleavage stimulation factor subunit 1 (Cstf1) from Mus musculus (Mouse).